The chain runs to 259 residues: MTMPYYASAEQIMRDRSELARKGIARGRSVVVLTFRDGVLFVAENPSTALHKVSELYDRLGFAAVGKYNEFENLRRAGIVHADMRGYSYDRRDVTGRSLANAYAQTLGTIFTEQPKPYEVEICVAEVGRVGSPKAPQLYRITYDGSIVDEQHFVVMGGTTEPIATAMRESYRADLDLEAAVGIAVNALRQGGAGEGEKRNVDVASLEVAVLDQSRPRRAFRRIAGTALEQLVPAEPAAASESAPEPKPDTETKPADTQD.

The tract at residues 231-259 (LVPAEPAAASESAPEPKPDTETKPADTQD) is disordered. The span at 233-243 (PAEPAAASESA) shows a compositional bias: low complexity. The span at 244–259 (PEPKPDTETKPADTQD) shows a compositional bias: basic and acidic residues.

It belongs to the peptidase T1A family. As to quaternary structure, the 20S proteasome core is composed of 14 alpha and 14 beta subunits that assemble into four stacked heptameric rings, resulting in a barrel-shaped structure. The two inner rings, each composed of seven catalytic beta subunits, are sandwiched by two outer rings, each composed of seven alpha subunits. All four combinations of alpha- and beta-subunits (beta2-alpha1, beta2-alpha2, beta1-alpha2 and beta1-alpha1) yield fully assembled and proteolytically active proteasomes. The catalytic chamber with the active sites is on the inside of the barrel. Has probably a gated structure, the ends of the cylinder being occluded by the N-termini of the alpha-subunits. Is likely capped by the proteasome-associated ATPase, ARC. In terms of processing, the N-terminus is blocked.

The protein resides in the cytoplasm. The protein operates within protein degradation; proteasomal Pup-dependent pathway. With respect to regulation, the formation of the proteasomal ATPase ARC-20S proteasome complex, likely via the docking of the C-termini of ARC into the intersubunit pockets in the alpha-rings, may trigger opening of the gate for substrate entry. Interconversion between the open-gate and close-gate conformations leads to a dynamic regulation of the 20S proteasome proteolysis activity. Functionally, component of the proteasome core, a large protease complex with broad specificity involved in protein degradation. The R.erythropolis proteasomes are able to cleave oligopeptides after Tyr, Phe and Leu, very poorly after Arg but not after Glu. Thus, displays chymotrypsin-like activity, low trypsin-like activity but no caspase-like activity. This is Proteasome subunit alpha 1 from Rhodococcus erythropolis (Arthrobacter picolinophilus).